Here is a 742-residue protein sequence, read N- to C-terminus: Collectin-12 (742 aa).

Residues 1–37 (MKDDFAEEEEVQSFGYKRFGIQEGTQCTKCKNNWALK) are Cytoplasmic-facing. A helical; Signal-anchor for type II membrane protein transmembrane segment spans residues 38–58 (FSIILLYILCVLLTITIAILG). The Extracellular portion of the chain corresponds to 59–742 (YKVVEKMDNV…DMDKEQIFGV (684 aa)). 2 coiled-coil regions span residues 71-101 (GLET…GQKA) and 271-334 (NNSA…QLEE). Positions 439–605 (TILQGPPGPR…SEPTSVPEAN (167 aa)) are disordered. 2 Collagen-like domains span residues 467-526 (GQKG…SGDP) and 527-586 (GPPG…PGPP). A compositionally biased stretch (pro residues) spans 475-492 (PGPPGPAGEKGPPGPIGP). Low complexity-rich tracts occupy residues 502-522 (RGSP…LPGP) and 532-556 (QGKD…VGEP). Positions 571–589 (PGLPGPKGPPGPPGPPGPG) are enriched in pro residues. Disulfide bonds link cysteine 607–cysteine 618, cysteine 635–cysteine 730, and cysteine 708–cysteine 722. Residues 614–731 (YTEKCYYFSI…CEDVNNFICE (118 aa)) form the C-type lectin domain. Residues isoleucine 644, asparagine 646, glutamate 650, aspartate 670, and glutamate 674 each contribute to the Ca(2+) site. A carbohydrate-binding residues include lysine 691, glutamine 694, and aspartate 696. Ca(2+)-binding residues include glutamine 694, aspartate 696, asparagine 697, glutamate 706, aspartate 707, asparagine 718, aspartate 719, and glutamate 731. Residue glutamate 706 participates in a carbohydrate binding. Residues asparagine 718 and aspartate 719 each contribute to the a carbohydrate site.

Widely expressed.

The protein localises to the membrane. In terms of biological role, scavenger receptor that displays several functions associated with host defense. Binds to carbohydrates. This is Collectin-12 (COLEC12) from Gallus gallus (Chicken).